Consider the following 343-residue polypeptide: MTITPQEALQRTIEHREIFHDEMLHLMRLIMRGDMSPVMAAAIITGLRVKKETIGEITAAATVMREFARHVEVEDNANFVDIVGTGGDGSHTFNISTATMFVAAAAGAKVAKHGNRGVSSKSGSADVLEALGVNIDLQPEQVAASIAETGMGFMFAPNHHPAMRNIAPVRRELGVRTIFNILGPLTNPADAPNQLMGVFHPDLVGIQVRVMQRLGARHVLVVYGKDGMDEVSLGAATLVGELRDGEVREYEIHPEDFGMQMVSNRTLKVENAGESRVMLLEALGNKPGVAREIVTLNAGTALYSANVAGSIADGIQLAREAIASGRAREKVDELARFTQQFKR.

Residues G84, G87–D88, T92, N94–T97, K112–S120, and S124 contribute to the 5-phospho-alpha-D-ribose 1-diphosphate site. G84 contributes to the anthranilate binding site. S96 provides a ligand contact to Mg(2+). Anthranilate is bound at residue N115. R170 contacts anthranilate. D229 and E230 together coordinate Mg(2+).

The protein belongs to the anthranilate phosphoribosyltransferase family. As to quaternary structure, homodimer. The cofactor is Mg(2+).

The catalysed reaction is N-(5-phospho-beta-D-ribosyl)anthranilate + diphosphate = 5-phospho-alpha-D-ribose 1-diphosphate + anthranilate. It participates in amino-acid biosynthesis; L-tryptophan biosynthesis; L-tryptophan from chorismate: step 2/5. Catalyzes the transfer of the phosphoribosyl group of 5-phosphorylribose-1-pyrophosphate (PRPP) to anthranilate to yield N-(5'-phosphoribosyl)-anthranilate (PRA). The protein is Anthranilate phosphoribosyltransferase of Burkholderia thailandensis (strain ATCC 700388 / DSM 13276 / CCUG 48851 / CIP 106301 / E264).